A 471-amino-acid polypeptide reads, in one-letter code: Kynurenine 3-monooxygenase (471 aa).

Residues V19, 37-40 (YESR), and A57 each bind FAD. 2 residues coordinate L-kynurenine: R85 and Y99. FAD-binding positions include R111, L136, T172, D304, and 317-318 (MN). The L-kynurenine site is built by N363 and Y398. The next 2 helical transmembrane spans lie at 385–404 (CLHT…VTFS) and 425–445 (ALFF…TGPT).

This sequence belongs to the aromatic-ring hydroxylase family. KMO subfamily. It depends on FAD as a cofactor.

It is found in the mitochondrion outer membrane. It catalyses the reaction L-kynurenine + NADPH + O2 + H(+) = 3-hydroxy-L-kynurenine + NADP(+) + H2O. It functions in the pathway cofactor biosynthesis; NAD(+) biosynthesis; quinolinate from L-kynurenine: step 1/3. Functionally, catalyzes the hydroxylation of L-kynurenine (L-Kyn) to form 3-hydroxy-L-kynurenine (L-3OHKyn). Required for synthesis of quinolinic acid, a neurotoxic NMDA receptor antagonist and potential endogenous inhibitor of NMDA receptor signaling in axonal targeting, synaptogenesis and apoptosis during brain development. Quinolinic acid may also affect NMDA receptor signaling in pancreatic beta cells, osteoblasts, myocardial cells, and the gastrointestinal tract. This Sus scrofa (Pig) protein is Kynurenine 3-monooxygenase.